The sequence spans 297 residues: Mycothiol acetyltransferase (297 aa).

N-acetyltransferase domains lie at 7–156 (VFSD…VTIR) and 153–297 (VTIR…PPPH). Glutamate 38 is a 1D-myo-inositol 2-(L-cysteinylamino)-2-deoxy-alpha-D-glucopyranoside binding site. 79–81 (VVV) is an acetyl-CoA binding site. 3 residues coordinate 1D-myo-inositol 2-(L-cysteinylamino)-2-deoxy-alpha-D-glucopyranoside: glutamate 180, lysine 219, and glutamate 227. Residues 231–233 (VGV) and 238–244 (QGLGLGR) contribute to the acetyl-CoA site. Tyrosine 265 serves as a coordination point for 1D-myo-inositol 2-(L-cysteinylamino)-2-deoxy-alpha-D-glucopyranoside. 270-275 (NRPALR) is an acetyl-CoA binding site.

The protein belongs to the acetyltransferase family. MshD subfamily. As to quaternary structure, monomer.

The catalysed reaction is 1D-myo-inositol 2-(L-cysteinylamino)-2-deoxy-alpha-D-glucopyranoside + acetyl-CoA = mycothiol + CoA + H(+). Its function is as follows. Catalyzes the transfer of acetyl from acetyl-CoA to desacetylmycothiol (Cys-GlcN-Ins) to form mycothiol. The chain is Mycothiol acetyltransferase from Thermomonospora curvata (strain ATCC 19995 / DSM 43183 / JCM 3096 / KCTC 9072 / NBRC 15933 / NCIMB 10081 / Henssen B9).